A 419-amino-acid chain; its full sequence is Serine hydroxymethyltransferase (419 aa).

(6S)-5,6,7,8-tetrahydrofolate contacts are provided by residues Leu-121 and 125 to 127; that span reads GHL. Lys-230 carries the post-translational modification N6-(pyridoxal phosphate)lysine.

It belongs to the SHMT family. As to quaternary structure, homodimer. The cofactor is pyridoxal 5'-phosphate.

The protein resides in the cytoplasm. The enzyme catalyses (6R)-5,10-methylene-5,6,7,8-tetrahydrofolate + glycine + H2O = (6S)-5,6,7,8-tetrahydrofolate + L-serine. It participates in one-carbon metabolism; tetrahydrofolate interconversion. It functions in the pathway amino-acid biosynthesis; glycine biosynthesis; glycine from L-serine: step 1/1. In terms of biological role, catalyzes the reversible interconversion of serine and glycine with tetrahydrofolate (THF) serving as the one-carbon carrier. This reaction serves as the major source of one-carbon groups required for the biosynthesis of purines, thymidylate, methionine, and other important biomolecules. Also exhibits THF-independent aldolase activity toward beta-hydroxyamino acids, producing glycine and aldehydes, via a retro-aldol mechanism. The sequence is that of Serine hydroxymethyltransferase from Vesicomyosocius okutanii subsp. Calyptogena okutanii (strain HA).